Consider the following 208-residue polypeptide: Uracil phosphoribosyltransferase (208 aa).

5-phospho-alpha-D-ribose 1-diphosphate contacts are provided by residues R78, R103, and 130–138; that span reads DPMLATGGT. Uracil contacts are provided by residues I193 and 198–200; that span reads GDA. D199 lines the 5-phospho-alpha-D-ribose 1-diphosphate pocket.

The protein belongs to the UPRTase family. Mg(2+) serves as cofactor.

It catalyses the reaction UMP + diphosphate = 5-phospho-alpha-D-ribose 1-diphosphate + uracil. It participates in pyrimidine metabolism; UMP biosynthesis via salvage pathway; UMP from uracil: step 1/1. With respect to regulation, allosterically activated by GTP. In terms of biological role, catalyzes the conversion of uracil and 5-phospho-alpha-D-ribose 1-diphosphate (PRPP) to UMP and diphosphate. This is Uracil phosphoribosyltransferase from Nitratidesulfovibrio vulgaris (strain DSM 19637 / Miyazaki F) (Desulfovibrio vulgaris).